The sequence spans 423 residues: Imidazolonepropionase (423 aa).

2 residues coordinate Fe(3+): H78 and H80. Residues H78 and H80 each coordinate Zn(2+). R87, Y150, and H183 together coordinate 4-imidazolone-5-propanoate. Y150 contributes to the N-formimidoyl-L-glutamate binding site. Residue H247 coordinates Fe(3+). H247 provides a ligand contact to Zn(2+). E250 is a binding site for 4-imidazolone-5-propanoate. D322 lines the Fe(3+) pocket. D322 provides a ligand contact to Zn(2+). Residues N324 and G326 each coordinate N-formimidoyl-L-glutamate. S327 serves as a coordination point for 4-imidazolone-5-propanoate.

It belongs to the metallo-dependent hydrolases superfamily. HutI family. The cofactor is Zn(2+). Fe(3+) serves as cofactor.

It is found in the cytoplasm. It carries out the reaction 4-imidazolone-5-propanoate + H2O = N-formimidoyl-L-glutamate. It functions in the pathway amino-acid degradation; L-histidine degradation into L-glutamate; N-formimidoyl-L-glutamate from L-histidine: step 3/3. Its function is as follows. Catalyzes the hydrolytic cleavage of the carbon-nitrogen bond in imidazolone-5-propanoate to yield N-formimidoyl-L-glutamate. It is the third step in the universal histidine degradation pathway. This is Imidazolonepropionase from Bacillus cytotoxicus (strain DSM 22905 / CIP 110041 / 391-98 / NVH 391-98).